A 195-amino-acid polypeptide reads, in one-letter code: Transcriptional regulator LdrP (195 aa).

An HTH crp-type domain is found at 110–182 (GELRARIARY…YRRVYLLDLA (73 aa)). Positions 142–161 (HEEIADATASIRESVSKVLA) form a DNA-binding region, H-T-H motif.

Functionally, activates transcription. Positively regulates PcrtB promoter upstream of the crtB operon in a cAMP-independent manner. Regulated genes include genes encoding DNA photolyase, phytoene synthase and cytochrome P450 monooxygenase, which are involved in carotenoid biosynthesis. Positively regulates the light-inducible gene cluster in the megaplasmid in a cAMP-independent manner. This Thermus thermophilus (strain ATCC BAA-163 / DSM 7039 / HB27) protein is Transcriptional regulator LdrP.